A 70-amino-acid chain; its full sequence is Small ribosomal subunit protein bS21 (70 aa).

It belongs to the bacterial ribosomal protein bS21 family.

The chain is Small ribosomal subunit protein bS21 from Sulfurovum sp. (strain NBC37-1).